The following is a 381-amino-acid chain: Diguanylate cyclase DosC (381 aa).

Residue His-98 coordinates heme. The region spanning 325-381 is the GGDEF domain; it reads TPLSVLIIDVDKFKEINDTWGHNTGDEILRKVSFLSQKRLVKSKILGAGSSRKLAVS. Asp-333 provides a ligand contact to Mg(2+). 2 residues coordinate substrate: Asn-341 and Asp-350.

Heme is required as a cofactor. It depends on Mg(2+) as a cofactor.

The catalysed reaction is 2 GTP = 3',3'-c-di-GMP + 2 diphosphate. It functions in the pathway purine metabolism; 3',5'-cyclic di-GMP biosynthesis. Functionally, globin-coupled heme-based oxygen sensor protein displaying diguanylate cyclase (DGC) activity in response to oxygen availability. Thus, catalyzes the synthesis of cyclic diguanylate (c-di-GMP) via the condensation of 2 GTP molecules. Cyclic-di-GMP is a second messenger which controls cell surface-associated traits in bacteria. The chain is Diguanylate cyclase DosC (dosC) from Shigella flexneri serotype 5b (strain 8401).